A 156-amino-acid chain; its full sequence is Small ribosomal subunit protein uS7 (156 aa).

It belongs to the universal ribosomal protein uS7 family. Part of the 30S ribosomal subunit. Contacts proteins S9 and S11.

In terms of biological role, one of the primary rRNA binding proteins, it binds directly to 16S rRNA where it nucleates assembly of the head domain of the 30S subunit. Is located at the subunit interface close to the decoding center, probably blocks exit of the E-site tRNA. In Geobacillus thermodenitrificans (strain NG80-2), this protein is Small ribosomal subunit protein uS7.